The sequence spans 375 residues: tRNA(Met) cytidine acetate ligase (375 aa).

ATP is bound by residues valine 7–histidine 20, glycine 101, asparagine 151, and arginine 176.

It belongs to the TmcAL family.

The protein resides in the cytoplasm. The catalysed reaction is cytidine(34) in elongator tRNA(Met) + acetate + ATP = N(4)-acetylcytidine(34) in elongator tRNA(Met) + AMP + diphosphate. In terms of biological role, catalyzes the formation of N(4)-acetylcytidine (ac(4)C) at the wobble position of elongator tRNA(Met), using acetate and ATP as substrates. First activates an acetate ion to form acetyladenylate (Ac-AMP) and then transfers the acetyl group to tRNA to form ac(4)C34. This chain is tRNA(Met) cytidine acetate ligase, found in Limosilactobacillus fermentum (strain NBRC 3956 / LMG 18251) (Lactobacillus fermentum).